Here is a 366-residue protein sequence, read N- to C-terminus: Agamous-like MADS-box protein AGL36 (366 aa).

The MADS-box domain maps to 1-59 (MKKVKLSLIANERSRKTSFIKRKDGIFKKLHELSTLCGVQACALIYSPFIPVPESWPSR). The stretch at 86 to 115 (TYLMERITKAKEQLKNLAAENRELQVRRFM) forms a coiled coil.

In terms of assembly, interacts with AGL62.

It is found in the nucleus. Probable transcription factor. In Arabidopsis thaliana (Mouse-ear cress), this protein is Agamous-like MADS-box protein AGL36 (AGL36).